Reading from the N-terminus, the 83-residue chain is Large ribosomal subunit protein bL27 (83 aa).

Belongs to the bacterial ribosomal protein bL27 family.

This is Large ribosomal subunit protein bL27 from Treponema denticola (strain ATCC 35405 / DSM 14222 / CIP 103919 / JCM 8153 / KCTC 15104).